The sequence spans 224 residues: Deoxyribose-phosphate aldolase (224 aa).

Asp92 serves as the catalytic Proton donor/acceptor. Lys155 serves as the catalytic Schiff-base intermediate with acetaldehyde. The Proton donor/acceptor role is filled by Lys184.

It belongs to the DeoC/FbaB aldolase family. DeoC type 1 subfamily.

It localises to the cytoplasm. It carries out the reaction 2-deoxy-D-ribose 5-phosphate = D-glyceraldehyde 3-phosphate + acetaldehyde. The protein operates within carbohydrate degradation; 2-deoxy-D-ribose 1-phosphate degradation; D-glyceraldehyde 3-phosphate and acetaldehyde from 2-deoxy-alpha-D-ribose 1-phosphate: step 2/2. Functionally, catalyzes a reversible aldol reaction between acetaldehyde and D-glyceraldehyde 3-phosphate to generate 2-deoxy-D-ribose 5-phosphate. This chain is Deoxyribose-phosphate aldolase, found in Clostridium perfringens (strain ATCC 13124 / DSM 756 / JCM 1290 / NCIMB 6125 / NCTC 8237 / Type A).